A 269-amino-acid polypeptide reads, in one-letter code: 3-methyl-2-oxobutanoate hydroxymethyltransferase (269 aa).

Positions 50 and 89 each coordinate Mg(2+). 3-methyl-2-oxobutanoate contacts are provided by residues 50-51 (DS), Asp-89, and Lys-118. Glu-120 lines the Mg(2+) pocket. The active-site Proton acceptor is the Glu-187.

Belongs to the PanB family. In terms of assembly, homodecamer; pentamer of dimers. Requires Mg(2+) as cofactor.

It localises to the cytoplasm. The enzyme catalyses 3-methyl-2-oxobutanoate + (6R)-5,10-methylene-5,6,7,8-tetrahydrofolate + H2O = 2-dehydropantoate + (6S)-5,6,7,8-tetrahydrofolate. It functions in the pathway cofactor biosynthesis; (R)-pantothenate biosynthesis; (R)-pantoate from 3-methyl-2-oxobutanoate: step 1/2. Catalyzes the reversible reaction in which hydroxymethyl group from 5,10-methylenetetrahydrofolate is transferred onto alpha-ketoisovalerate to form ketopantoate. This chain is 3-methyl-2-oxobutanoate hydroxymethyltransferase, found in Nitrosomonas europaea (strain ATCC 19718 / CIP 103999 / KCTC 2705 / NBRC 14298).